A 556-amino-acid polypeptide reads, in one-letter code: Formate--tetrahydrofolate ligase (556 aa).

65–72 provides a ligand contact to ATP; the sequence is TPAGEGKT.

This sequence belongs to the formate--tetrahydrofolate ligase family.

It catalyses the reaction (6S)-5,6,7,8-tetrahydrofolate + formate + ATP = (6R)-10-formyltetrahydrofolate + ADP + phosphate. Its pathway is one-carbon metabolism; tetrahydrofolate interconversion. This is Formate--tetrahydrofolate ligase from Proteus mirabilis (strain HI4320).